The sequence spans 424 residues: Serine--tRNA ligase (424 aa).

232 to 234 (TAE) contacts L-serine. 263 to 265 (RQE) contributes to the ATP binding site. Residue Glu-286 coordinates L-serine. ATP is bound at residue 350–353 (EIGS). L-serine is bound at residue Ser-386.

The protein belongs to the class-II aminoacyl-tRNA synthetase family. Type-1 seryl-tRNA synthetase subfamily. As to quaternary structure, homodimer. The tRNA molecule binds across the dimer.

It is found in the cytoplasm. It catalyses the reaction tRNA(Ser) + L-serine + ATP = L-seryl-tRNA(Ser) + AMP + diphosphate + H(+). It carries out the reaction tRNA(Sec) + L-serine + ATP = L-seryl-tRNA(Sec) + AMP + diphosphate + H(+). It functions in the pathway aminoacyl-tRNA biosynthesis; selenocysteinyl-tRNA(Sec) biosynthesis; L-seryl-tRNA(Sec) from L-serine and tRNA(Sec): step 1/1. Functionally, catalyzes the attachment of serine to tRNA(Ser). Is also able to aminoacylate tRNA(Sec) with serine, to form the misacylated tRNA L-seryl-tRNA(Sec), which will be further converted into selenocysteinyl-tRNA(Sec). The polypeptide is Serine--tRNA ligase (Aster yellows witches'-broom phytoplasma (strain AYWB)).